A 473-amino-acid chain; its full sequence is Hyaluronidase-2 (473 aa).

Positions 1–20 are cleaved as a signal peptide; sequence MRAGPGPTVTLALVLAVSWA. Intrachain disulfides connect Cys47-Cys340 and Cys211-Cys227. N-linked (GlcNAc...) asparagine glycans are attached at residues Asn74 and Asn103. Glu135 (proton donor) is an active-site residue. An N-linked (GlcNAc...) asparagine glycan is attached at Asn357. Residues 361 to 439 form the EGF-like domain; that stretch reads ATQYCSRAQC…YLGWSGEQCQ (79 aa). 3 disulfides stabilise this stretch: Cys365–Cys376, Cys370–Cys427, and Cys429–Cys438. A lipid anchor (GPI-anchor amidated glycine) is attached at Gly448. Positions 449 to 473 are cleaved as a propeptide — removed in mature form; sequence ASEAWAGSHLTSLLALAALAFTWTL.

It belongs to the glycosyl hydrolase 56 family. As to quaternary structure, interacts with MST1R. Widely expressed (at protein level).

Its subcellular location is the cell membrane. The enzyme catalyses Random hydrolysis of (1-&gt;4)-linkages between N-acetyl-beta-D-glucosamine and D-glucuronate residues in hyaluronate.. Functionally, catalyzes hyaluronan degradation into small fragments that are endocytosed and degraded in lysosomes by HYAL1 and exoglycosidases. Essential for the breakdown of extracellular matrix hyaluronan. The protein is Hyaluronidase-2 (HYAL2) of Homo sapiens (Human).